Consider the following 322-residue polypeptide: Manganese-dependent ADP-ribose/CDP-alcohol diphosphatase (322 aa).

Residues D13, Q15, D60, N96, H228, H265, and H267 each coordinate Zn(2+).

This sequence belongs to the ADPRibase-Mn family. As to quaternary structure, monomer. The cofactor is Mg(2+).

The catalysed reaction is CDP-choline + H2O = phosphocholine + CMP + 2 H(+). It carries out the reaction ADP-D-ribose + H2O = D-ribose 5-phosphate + AMP + 2 H(+). It catalyses the reaction CDP-glycerol + H2O = sn-glycerol 3-phosphate + CMP + 2 H(+). Its function is as follows. Hydrolyzes ADP-ribose, IDP-ribose, CDP-glycerol, CDP-choline and CDP-ethanolamine, but not other non-reducing ADP-sugars or CDP-glucose. In Danio rerio (Zebrafish), this protein is Manganese-dependent ADP-ribose/CDP-alcohol diphosphatase (adprm).